Here is a 287-residue protein sequence, read N- to C-terminus: Protein-export membrane protein SecF (287 aa).

6 helical membrane passes run 21-41 (LIAI…FNGL), 129-149 (QIYW…FIIF), 158-178 (VILA…LFGI), 182-202 (LASV…DILL), 226-246 (VTMS…TVFV), and 259-279 (VLII…LGIL).

Belongs to the SecD/SecF family. SecF subfamily. In terms of assembly, part of the protein translocation apparatus. Forms a complex with SecD.

The protein localises to the cell membrane. Its function is as follows. Involved in protein export. This is Protein-export membrane protein SecF from Methanothermobacter thermautotrophicus (strain ATCC 29096 / DSM 1053 / JCM 10044 / NBRC 100330 / Delta H) (Methanobacterium thermoautotrophicum).